The primary structure comprises 2603 residues: Squalestatin tetraketide synthase (2603 aa).

In terms of domain architecture, Ketosynthase family 3 (KS3) spans 29 to 455 (TIPIAIIGMS…GANAHVILES (427 aa)). Residues C202, H337, and H377 each act as for beta-ketoacyl synthase activity in the active site. The disordered stretch occupies residues 463 to 512 (IANGSGRSNGTGNGHNGANGTTNGHNGTNGTTNGHFDATQATNGHYGTDE). The span at 469-479 (RSNGTGNGHNG) shows a compositional bias: gly residues. Residues 480-497 (ANGTTNGHNGTNGTTNGH) show a composition bias toward low complexity. Residues 608–931 (VFTGQGAQWF…PYISCLLRGQ (324 aa)) are malonyl-CoA:ACP transacylase (MAT) domain. The tract at residues 1000–1138 (HDLLGSLIVG…GRITIEFDTS (139 aa)) is N-terminal hotdog fold. Positions 1000 to 1314 (HDLLGSLIVG…NQSVGQMAPQ (315 aa)) constitute a PKS/mFAS DH domain. Residues 1000–1314 (HDLLGSLIVG…NQSVGQMAPQ (315 aa)) form a dehydratase (DH) domain region. The active-site Proton acceptor; for dehydratase activity is H1032. The C-terminal hotdog fold stretch occupies residues 1157-1314 (LMRSVDPSNL…NQSVGQMAPQ (158 aa)). The active-site Proton donor; for dehydratase activity is D1223. The interval 1465–1665 (LYRYYTDAIK…GLDIELRDCD (201 aa)) is methyltransferase (CMet) domain. Residues 1892–2205 (GLIDTLQFSK…AGKHMGKIVI (314 aa)) are enoyl reductase (ER) (ER) domain. Residues 2228-2406 (ASYLIVGGLG…AVSIDLGMVQ (179 aa)) are ketoreductase (KR) domain. Residues 2516-2593 (EAIDVVGRAI…ALATTVATKS (78 aa)) form the Carrier domain. The residue at position 2553 (S2553) is an O-(pantetheine 4'-phosphoryl)serine.

It participates in secondary metabolite biosynthesis. Functionally, highly reducing polyketide synthase (HR-PKS); part of the gene cluster that mediates the biosynthesis of squalestatin S1 (SQS1, also known as zaragozic acid A), a lead compound for the treatment of hyper-cholesterolemia by targeting squalene synthase (SS). Pks1 is responsible for the biosynthesis of the tetraketide sidechain of SQS1. The biosynthesis must involve 3 rounds of chain extension. After the first and second rounds methyl-transfer occurs, and in all rounds of extension the ketoreductase and dehydratase are active. The enoyl reductase and C-MeT are not active in the final round of extension. This chain is Squalestatin tetraketide synthase, found in Phoma sp. (strain C2932).